The following is a 150-amino-acid chain: 1,4-dihydroxy-2-naphthoyl-CoA hydrolase (150 aa).

D22 is a catalytic residue.

This sequence belongs to the 4-hydroxybenzoyl-CoA thioesterase family. DHNA-CoA hydrolase subfamily.

It carries out the reaction 1,4-dihydroxy-2-naphthoyl-CoA + H2O = 1,4-dihydroxy-2-naphthoate + CoA + H(+). Its pathway is cofactor biosynthesis; phylloquinone biosynthesis. It participates in quinol/quinone metabolism; 1,4-dihydroxy-2-naphthoate biosynthesis; 1,4-dihydroxy-2-naphthoate from chorismate: step 7/7. In terms of biological role, catalyzes the hydrolysis of 1,4-dihydroxy-2-naphthoyl-CoA (DHNA-CoA) to 1,4-dihydroxy-2-naphthoate (DHNA), a reaction involved in phylloquinone (vitamin K1) biosynthesis. This Prochlorococcus marinus (strain NATL1A) protein is 1,4-dihydroxy-2-naphthoyl-CoA hydrolase.